We begin with the raw amino-acid sequence, 362 residues long: tRNA/tmRNA (uracil-C(5))-methyltransferase (362 aa).

The S-adenosyl-L-methionine site is built by glutamine 182, tyrosine 210, asparagine 215, glutamate 231, and aspartate 293. The active-site Nucleophile is cysteine 318. Glutamate 352 functions as the Proton acceptor in the catalytic mechanism.

This sequence belongs to the class I-like SAM-binding methyltransferase superfamily. RNA M5U methyltransferase family. TrmA subfamily.

It carries out the reaction uridine(54) in tRNA + S-adenosyl-L-methionine = 5-methyluridine(54) in tRNA + S-adenosyl-L-homocysteine + H(+). The enzyme catalyses uridine(341) in tmRNA + S-adenosyl-L-methionine = 5-methyluridine(341) in tmRNA + S-adenosyl-L-homocysteine + H(+). Dual-specificity methyltransferase that catalyzes the formation of 5-methyluridine at position 54 (m5U54) in all tRNAs, and that of position 341 (m5U341) in tmRNA (transfer-mRNA). The polypeptide is tRNA/tmRNA (uracil-C(5))-methyltransferase (Neisseria gonorrhoeae (strain ATCC 700825 / FA 1090)).